A 239-amino-acid polypeptide reads, in one-letter code: Beta-glucanase (239 aa).

The first 25 residues, 1 to 25 (MKRVLLILVTGLFMSLCGITSSVSA), serve as a signal peptide directing secretion. One can recognise a GH16 domain in the interval 26–239 (QTGGSFFEPF…HYDWMRYRKK (214 aa)). Cysteine 57 and cysteine 86 are oxidised to a cystine. The Nucleophile role is filled by glutamate 134.

This sequence belongs to the glycosyl hydrolase 16 family.

The enzyme catalyses Hydrolysis of (1-&gt;4)-beta-D-glucosidic linkages in beta-D-glucans containing (1-&gt;3)- and (1-&gt;4)-bonds.. This Bacillus amyloliquefaciens (Bacillus velezensis) protein is Beta-glucanase (bglA).